Reading from the N-terminus, the 688-residue chain is ATP-dependent RNA helicase ded1 (688 aa).

Composition is skewed to polar residues over residues 1–15 (MADQ…LSID) and 55–67 (GLNN…NNNY). The tract at residues 1–170 (MADQLSSGMG…TPDDPSKQHT (170 aa)) is disordered. Over residues 88 to 102 (GFEGQQGAGWGGPRP) the composition is skewed to gly residues. Positions 103 to 114 (QGGFNPNAYRGN) are enriched in low complexity. Positions 115–129 (AGAGAGAGAGGGGGS) are enriched in gly residues. The Q motif motif lies at 194–222 (LTFSNPPLDNHLISNIQLARYNVPTPVQK). A Helicase ATP-binding domain is found at 225 to 416 (IPIVMGGRDL…RDFLKDYIFL (192 aa)). 238-245 (AQTGSGKT) provides a ligand contact to ATP. Residues 360 to 363 (DEAD) carry the DEAD box motif. The Helicase C-terminal domain occupies 427 to 587 (NITQKVEYVE…EVPAFLETIA (161 aa)). Residues 590-615 (SSFGGGRGGRGGGRGGGRGRTQTADY) are disordered. Gly residues predominate over residues 592-608 (FGGGRGGRGGGRGGGRG).

It belongs to the DEAD box helicase family. DDX3/DED1 subfamily.

It is found in the cytoplasm. It carries out the reaction ATP + H2O = ADP + phosphate + H(+). In terms of biological role, ATP-binding RNA helicase involved in translation initiation. Remodels RNA in response to ADP and ATP concentrations by facilitating disruption, but also formation of RNA duplexes. This is ATP-dependent RNA helicase ded1 (drh-9) from Neurospora crassa (strain ATCC 24698 / 74-OR23-1A / CBS 708.71 / DSM 1257 / FGSC 987).